We begin with the raw amino-acid sequence, 294 residues long: 4-hydroxy-tetrahydrodipicolinate synthase (294 aa).

Residue T44 participates in pyruvate binding. Y132 acts as the Proton donor/acceptor in catalysis. K161 functions as the Schiff-base intermediate with substrate in the catalytic mechanism. Residue I203 coordinates pyruvate.

The protein belongs to the DapA family. As to quaternary structure, homotetramer; dimer of dimers.

The protein localises to the cytoplasm. It carries out the reaction L-aspartate 4-semialdehyde + pyruvate = (2S,4S)-4-hydroxy-2,3,4,5-tetrahydrodipicolinate + H2O + H(+). It functions in the pathway amino-acid biosynthesis; L-lysine biosynthesis via DAP pathway; (S)-tetrahydrodipicolinate from L-aspartate: step 3/4. Catalyzes the condensation of (S)-aspartate-beta-semialdehyde [(S)-ASA] and pyruvate to 4-hydroxy-tetrahydrodipicolinate (HTPA). This Aquifex aeolicus (strain VF5) protein is 4-hydroxy-tetrahydrodipicolinate synthase.